We begin with the raw amino-acid sequence, 985 residues long: Regulator of telomere elongation helicase 1 homolog (985 aa).

One can recognise a Helicase ATP-binding domain in the interval 7-303 (AGIPVHFPFE…QDMGGDEPKD (297 aa)). ATP is bound at residue 42–49 (SPTGTGKT). Positions 146, 164, 173, and 209 each coordinate [4Fe-4S] cluster. Positions 252 to 255 (DEAH) match the DEAH box motif. Residues 858–884 (GSSGMVKIHKRERSSPTQPESSSQVSK) form a disordered region. Positions 872–882 (SPTQPESSSQV) are enriched in polar residues. At Thr-874 the chain carries Phosphothreonine.

The protein belongs to the helicase family. RAD3/XPD subfamily.

The protein localises to the nucleus. It carries out the reaction ATP + H2O = ADP + phosphate + H(+). In terms of biological role, a probable ATP-dependent DNA helicase implicated in DNA repair and the maintenance of genomic stability. Acts as an anti-recombinase to counteract toxic recombination and limit crossover during meiosis. Regulates meiotic recombination and crossover homeostasis by physically dissociating strand invasion events and thereby promotes noncrossover repair by meiotic synthesis dependent strand annealing (SDSA) as well as disassembly of D loop recombination intermediates. The protein is Regulator of telomere elongation helicase 1 homolog of Drosophila yakuba (Fruit fly).